Reading from the N-terminus, the 1134-residue chain is Tetrathionate reductase subunit A (1134 aa).

Positions 1–31 (MQLSRRDFIKGLVAVGSASVFLAGYSETVDR) form a signal peptide, tat-type signal. The 88-residue stretch at 46 to 133 (GRIVHSACLG…DGIHYLYDPY (88 aa)) folds into the 4Fe-4S Mo/W bis-MGD-type domain. Cys-53, Cys-56, Cys-60, and Cys-119 together coordinate [4Fe-4S] cluster.

It belongs to the prokaryotic molybdopterin-containing oxidoreductase family. In terms of assembly, probably composed of three subunits: TtrA, TtrB and TtrC. Precursor interacts with TtrD. [4Fe-4S] cluster serves as cofactor. The cofactor is Mo-bis(molybdopterin guanine dinucleotide). Exported by the Tat system. The position of the signal peptide cleavage has not been experimentally proven.

The protein resides in the cell membrane. Part of a membrane-bound tetrathionate reductase that catalyzes the reduction of tetrathionate to thiosulfate. TtrA is the catalytic subunit. The sequence is that of Tetrathionate reductase subunit A (ttrA) from Archaeoglobus fulgidus (strain ATCC 49558 / DSM 4304 / JCM 9628 / NBRC 100126 / VC-16).